The primary structure comprises 432 residues: Putative transferase At1g60990, chloroplastic (432 aa).

Residues 1–57 constitute a chloroplast transit peptide; the sequence is MNLLQSCKDMAMMMRIDSVSHITNTALLPCLYNGTVLRRRSLSLRKCGFRERKFQLR.

It belongs to the GcvT family. In terms of tissue distribution, expressed in young leaves (at protein level).

Its subcellular location is the plastid. The protein resides in the chloroplast. Folate-dependent protein involved in Fe/S cluster biogenesis. Functionally complements an E.coli mutant defective in ygfZ. This chain is Putative transferase At1g60990, chloroplastic, found in Arabidopsis thaliana (Mouse-ear cress).